Reading from the N-terminus, the 355-residue chain is Histidinol-phosphate aminotransferase (355 aa).

Position 218 is an N6-(pyridoxal phosphate)lysine (Lys-218).

Belongs to the class-II pyridoxal-phosphate-dependent aminotransferase family. Histidinol-phosphate aminotransferase subfamily. Homodimer. Pyridoxal 5'-phosphate serves as cofactor.

The catalysed reaction is L-histidinol phosphate + 2-oxoglutarate = 3-(imidazol-4-yl)-2-oxopropyl phosphate + L-glutamate. The protein operates within amino-acid biosynthesis; L-histidine biosynthesis; L-histidine from 5-phospho-alpha-D-ribose 1-diphosphate: step 7/9. The polypeptide is Histidinol-phosphate aminotransferase (Chlorobaculum parvum (strain DSM 263 / NCIMB 8327) (Chlorobium vibrioforme subsp. thiosulfatophilum)).